Consider the following 912-residue polypeptide: Alpha-actinin-4 (912 aa).

The actin-binding stretch occupies residues 1-267 (MVDYHAANQA…IMTYVSSFYH (267 aa)). The interval 12 to 27 (QYGPNSGGGNGAGGGG) is interaction with VCL. Positions 12 to 31 (QYGPNSGGGNGAGGGGSMGD) are disordered. Over residues 16–29 (NSGGGNGAGGGGSM) the composition is skewed to gly residues. Residue Tyr32 is modified to Phosphotyrosine. The tract at residues 41 to 62 (RDLLLDPAWEKQQRKTFTAWCN) is interaction with VCL. 2 consecutive Calponin-homology (CH) domains span residues 51-155 (KQQR…LRFA) and 164-270 (TSAK…HAFS). The LXXLL motif signature appears at 85 to 89 (LMLLL). The interaction with VCL stretch occupies residues 109-127 (KINNVNKALDFIASKGVKL). The residue at position 115 (Lys115) is an N6-acetyllysine. Residues 178-193 (TAPYKNVNVQNFHISW) are polyphosphoinositide (PIP2)-binding. Position 215 is an N6-acetyllysine (Lys215). Phosphothreonine is present on Thr250. Spectrin repeat units lie at residues 294–404 (HLME…WLLN), 414–519 (HLAE…ALEK), 529–640 (QLHL…ALLE), and 650–753 (HLRR…EVEN). Lys593 and Lys626 each carry N6-acetyllysine. Position 697 is a phosphoserine (Ser697). The tract at residues 737–912 (WEQLLTTIAR…STALYGESDL (176 aa)) is mediates interaction with MICALL2. 2 consecutive EF-hand domains span residues 766 to 801 (EQMQ…LGYD) and 807 to 842 (QGDA…ETTD). Residue Asp779 coordinates Ca(2+). Lys780 bears the N6-acetyllysine mark. Residues Asp781 and Glu790 each coordinate Ca(2+). N6-acetyllysine is present on Lys860. A Phosphoserine modification is found at Ser910.

It belongs to the alpha-actinin family. Homodimer; antiparallel. Interacts with MAGI1. Interacts with PDLIM2. Identified in a complex with CASK, IQGAP1, MAGI2, NPHS1, SPTAN1 and SPTBN1. Identified in a IGF2BP1-dependent mRNP granule complex containing untranslated mRNAs. Component of the CART complex, at least composed of ACTN4, HGS/HRS, MYO5B and TRIM3. Binds TRIM3 at the N-terminus. Interacts with MICALL2 (preferentially in opened conformation); stimulated by RAB13 activation. Interacts with PPARG and RARA. Binds to VCL; this interaction triggers VCL conformational changes. Interacts with SEPTIN14. Interacts with IGSF8.

Its subcellular location is the nucleus. It localises to the cytoplasm. The protein resides in the cell junction. The protein localises to the cytoskeleton. It is found in the stress fiber. Its subcellular location is the perinuclear region. In terms of biological role, F-actin cross-linking protein which is thought to anchor actin to a variety of intracellular structures. This is a bundling protein. Probably involved in vesicular trafficking via its association with the CART complex. The CART complex is necessary for efficient transferrin receptor recycling but not for EGFR degradation. Involved in tight junction assembly in epithelial cells probably through interaction with MICALL2. Links MICALL2 to the actin cytoskeleton and recruits it to the tight junctions. May also function as a transcriptional coactivator, stimulating transcription mediated by the nuclear hormone receptors PPARG and RARA. Association with IGSF8 regulates the immune synapse formation and is required for efficient T-cell activation. The protein is Alpha-actinin-4 of Mus musculus (Mouse).